The sequence spans 230 residues: Large ribosomal subunit protein uL1 (230 aa).

The protein belongs to the universal ribosomal protein uL1 family. In terms of assembly, part of the 50S ribosomal subunit.

Binds directly to 23S rRNA. The L1 stalk is quite mobile in the ribosome, and is involved in E site tRNA release. Its function is as follows. Protein L1 is also a translational repressor protein, it controls the translation of the L11 operon by binding to its mRNA. The sequence is that of Large ribosomal subunit protein uL1 from Bifidobacterium longum subsp. infantis (strain ATCC 15697 / DSM 20088 / JCM 1222 / NCTC 11817 / S12).